A 339-amino-acid polypeptide reads, in one-letter code: DNA-directed RNA polymerase subunit alpha (339 aa).

The alpha N-terminal domain (alpha-NTD) stretch occupies residues 1 to 233 (MVREEVAGST…DLFLPFLHAE (233 aa)). Residues 264 to 339 (KKGIPLNCIF…IDLLKNKLSF (76 aa)) are alpha C-terminal domain (alpha-CTD).

Belongs to the RNA polymerase alpha chain family. In plastids the minimal PEP RNA polymerase catalytic core is composed of four subunits: alpha, beta, beta', and beta''. When a (nuclear-encoded) sigma factor is associated with the core the holoenzyme is formed, which can initiate transcription.

The protein resides in the plastid. It localises to the chloroplast. The catalysed reaction is RNA(n) + a ribonucleoside 5'-triphosphate = RNA(n+1) + diphosphate. Its function is as follows. DNA-dependent RNA polymerase catalyzes the transcription of DNA into RNA using the four ribonucleoside triphosphates as substrates. This Elymus hystrix (Eastern bottlebrush grass) protein is DNA-directed RNA polymerase subunit alpha.